A 499-amino-acid polypeptide reads, in one-letter code: MTVATGDPVDEAAALPGHPQDTYDPEADHECCERVVINISGLRFETQLKTLAQFPETLLGDPKKRMRYFDPLRNEYFFDRNRPSFDAILYYYQSGGRLRRPVNVPLDIFSEEIRFYELGEEAMEMFREDEGYIKEEERPLPENEFQRQVWLLFEYPESSGPARIIAIVSVMVILISIVSFCLETLPIFRDENEDMHGGGVTFHTYSNSTIGYQQSTSFTDPFFIVETLCIIWFSFEFLVRFFACPSKAGFFTNIMNIIDIVAIIPYFITLGTELAEKPEDAQQGQQAMSLAILRVIRLVRVFRIFKLSRHSKGLQILGQTLKASMRELGLLIFFLFIGVILFSSAVYFAEADERDSQFPSIPDAFWWAVVSMTTVGYGDMVPTTIGGKIVGSLCAIAGVLTIALPVPVIVSNFNYFYHRETEGEEQAQYLQVTSCPKIPSSPDLKKSRSASTISKSDYMEIQEGVNNSNEDFREENLKTANCTLANTNYVNITKMLTDV.

Residues 1–26 are disordered; it reads MTVATGDPVDEAAALPGHPQDTYDPE. The interval 1-125 is tetramerization domain; sequence MTVATGDPVD…YELGEEAMEM (125 aa). Residues 1–160 are Cytoplasmic-facing; that stretch reads MTVATGDPVD…LLFEYPESSG (160 aa). The helical transmembrane segment at 161–182 threads the bilayer; it reads PARIIAIVSVMVILISIVSFCL. Residues 183–221 are Extracellular-facing; sequence ETLPIFRDENEDMHGGGVTFHTYSNSTIGYQQSTSFTDP. N-linked (GlcNAc...) asparagine glycosylation occurs at Asn207. A helical transmembrane segment spans residues 222 to 243; the sequence is FFIVETLCIIWFSFEFLVRFFA. Residue Cys244 is the site of S-palmitoyl cysteine attachment. At 244–254 the chain is on the cytoplasmic side; that stretch reads CPSKAGFFTNI. The chain crosses the membrane as a helical span at residues 255–275; it reads MNIIDIVAIIPYFITLGTELA. The Extracellular segment spans residues 276 to 289; the sequence is EKPEDAQQGQQAMS. A helical; Voltage-sensor membrane pass occupies residues 290–310; the sequence is LAILRVIRLVRVFRIFKLSRH. Over 311 to 325 the chain is Cytoplasmic; the sequence is SKGLQILGQTLKASM. An S4-S5 linker region spans residues 312–325; that stretch reads KGLQILGQTLKASM. Residues 326–347 form a helical membrane-spanning segment; it reads RELGLLIFFLFIGVILFSSAVY. The Extracellular segment spans residues 348-361; that stretch reads FAEADERDSQFPSI. The helical intramembrane region spans 362–373; that stretch reads PDAFWWAVVSMT. Residues 374 to 379 carry the Selectivity filter motif; sequence TVGYGD. An intramembrane segment occupies 374 to 381; sequence TVGYGDMV. The Extracellular segment spans residues 382–388; the sequence is PTTIGGK. The helical transmembrane segment at 389–417 threads the bilayer; the sequence is IVGSLCAIAGVLTIALPVPVIVSNFNYFY. The Cytoplasmic segment spans residues 418–499; the sequence is HRETEGEEQA…VNITKMLTDV (82 aa). Residue Tyr429 is modified to Phosphotyrosine. Phosphoserine occurs at positions 434, 440, 441, and 449. Tyr458 is modified (phosphotyrosine). The residue at position 468 (Ser468) is a Phosphoserine. Residues 497-499 carry the PDZ-binding motif; it reads TDV.

Belongs to the potassium channel family. A (Shaker) (TC 1.A.1.2) subfamily. Kv1.2/KCNA2 sub-subfamily. Homotetramer and heterotetramer with other channel-forming alpha subunits, such as KCNA1, KCNA4, KCNA5, KCNA6 and KCNA7. Channel activity is regulated by interaction with beta subunits, including KCNAB1 and KCNAB2. Identified in a complex with KCNA1 and KCNAB2. Identified in a complex with KCNA5 and KCNAB1. Identified in a complex with KCNA4 and FYN. Interacts with PTK2B. Interacts (via C-terminus) with CTTN. Interacts with ADAM22. Interacts with CNTNAP2. Interacts (via C-terminus) with the PDZ domains of DLG1, DLG2 and DLG4. Interacts (via N-terminal cytoplasmic domain) with RHOA (GTP-bound form); this regulates channel activity by reducing location at the cell surface in response to CHRM1 activation. Interacts with DRD2. Interacts with SIGMAR1; cocaine consumption leads to increased interaction. Interacts with ADAM11. Interacts with LYNX1. Phosphorylated on tyrosine residues; phosphorylation increases in response to ischemia. Phosphorylated on tyrosine residues by activated PTK2B/PYK2. Phosphorylation on tyrosine residues suppresses ion channel activity. Phosphorylated on tyrosine residues in response to CHRM1 activation; this abolishes interaction with CTTN. This is probably due to endocytosis of the phosphorylated channel subunits. Phosphorylated on serine residues in response to increased cAMP levels; phosphorylation is apparently not catalyzed by PKA. In terms of processing, N-glycosylated, with complex, sialylated N-glycans. As to expression, detected in brain. Detected in cerebellum. Detected in mitral cells in the olfactory bulb. Detected in cochlea. Detected in cerebellum, particularly in the basket cell axon plexus and in the terminal regions around Purkinje cells (at protein level). Detected in juxtaparanodal regions in sciatic nerve. Detected in Schwann cells from sciatic nerve. Detected in dopamine neurons in substantia nigra. Detected in large myelinated fibers in juxtaparanodes in the CA3 and CA1 areas of the hippocampus. Detected in brain, in punctae on fiber tracts in brain stem and spinal cord, and on axons in the juxtaparanodal regions of the node of Ranvier (at protein level). Detected in dopamine neurons in the midbrain.

Its subcellular location is the cell membrane. It localises to the membrane. The protein localises to the cell projection. The protein resides in the axon. It is found in the synapse. Its subcellular location is the endoplasmic reticulum membrane. It localises to the lamellipodium membrane. The protein localises to the synaptosome. The protein resides in the presynaptic cell membrane. It is found in the dendrite. Its subcellular location is the perikaryon. It localises to the cell junction. The protein localises to the paranodal septate junction. The catalysed reaction is K(+)(in) = K(+)(out). With respect to regulation, inhibited by 4-aminopyridine (4-AP), dendrotoxin (DTX) and charybdotoxin (CTX), but not by tetraethylammonium (TEA). Inhibited by tityustoxin-K alpha (TsTX-Kalpha), a toxin that is highly specific for KCNA2. Inhibited by maurotoxin. Inhibited by kappaM conotoxins kappaM-RIIIJ and kappaM-RIIIK. In terms of biological role, voltage-gated potassium channel that mediates transmembrane potassium transport in excitable membranes, primarily in the brain and the central nervous system, but also in the cardiovascular system. Prevents aberrant action potential firing and regulates neuronal output. Forms tetrameric potassium-selective channels through which potassium ions pass in accordance with their electrochemical gradient. The channel alternates between opened and closed conformations in response to the voltage difference across the membrane. Can form functional homotetrameric channels and heterotetrameric channels that contain variable proportions of KCNA1, KCNA2, KCNA4, KCNA5, KCNA6, KCNA7, and possibly other family members as well; channel properties depend on the type of alpha subunits that are part of the channel. Channel properties are modulated by cytoplasmic beta subunits that regulate the subcellular location of the alpha subunits and promote rapid inactivation of delayed rectifier potassium channels. In vivo, membranes probably contain a mixture of heteromeric potassium channel complexes, making it difficult to assign currents observed in intact tissues to any particular potassium channel family member. Homotetrameric KCNA2 forms a delayed-rectifier potassium channel that opens in response to membrane depolarization, followed by slow spontaneous channel closure. In contrast, a heteromultimer formed by KCNA2 and KCNA4 shows rapid inactivation. Contributes to the regulation of action potentials in neurons. KCNA2-containing channels play a presynaptic role and prevent hyperexcitability and aberrant action potential firing. Response to toxins that are selective for KCNA1, respectively for KCNA2, suggests that heteromeric potassium channels composed of both KCNA1 and KCNA2 play a role in pacemaking and regulate the output of deep cerebellar nuclear neurons. Response to toxins that are selective for KCNA2-containing potassium channels suggests that in Purkinje cells, dendritic subthreshold KCNA2-containing potassium channels prevent random spontaneous calcium spikes, suppressing dendritic hyperexcitability without hindering the generation of somatic action potentials, and thereby play an important role in motor coordination. KCNA2-containing channels play a role in GABAergic transmission from basket cells to Purkinje cells in the cerebellum, and thereby play an import role in motor coordination. Plays a role in the induction of long-term potentiation of neuron excitability in the CA3 layer of the hippocampus. May function as down-stream effector for G protein-coupled receptors and inhibit GABAergic inputs to basolateral amygdala neurons. May contribute to the regulation of neurotransmitter release, such as gamma-aminobutyric acid (GABA). Contributes to the regulation of the axonal release of the neurotransmitter dopamine. Reduced KCNA2 expression plays a role in the perception of neuropathic pain after peripheral nerve injury, but not acute pain. Plays a role in the regulation of the time spent in non-rapid eye movement (NREM) sleep. The protein is Potassium voltage-gated channel subfamily A member 2 (Kcna2) of Mus musculus (Mouse).